Consider the following 439-residue polypeptide: Niacin transporter NiaP (439 aa).

Transmembrane regions (helical) follow at residues 20-40 (LWVV…IAFI), 57-77 (WIVS…GGLA), 84-104 (TVFA…AFAP), 108-128 (WLLA…PVAV), 143-163 (FIVL…LVSY), 169-189 (FGWH…YVII), 253-273 (LMLW…FTWL), 288-308 (FEYV…AAWL), 316-336 (ATLA…GQAD), 338-358 (VFNI…AWGV), 374-394 (FGAG…PIVV), and 407-427 (VFMM…ILGE).

It belongs to the major facilitator superfamily. Sugar transporter (TC 2.A.1.1) family.

It localises to the cell inner membrane. Functions as a high-affinity transporter of niacin (nicotinamide or nicotinate). Probably substantially contributes to niacin transport when its concentration in the medium is very low. In Acinetobacter baylyi (strain ATCC 33305 / BD413 / ADP1), this protein is Niacin transporter NiaP.